Here is a 172-residue protein sequence, read N- to C-terminus: Protein GrpE (172 aa).

Positions 1-23 are disordered; sequence MNQDHPECDSEELTQNSPETDPL.

It belongs to the GrpE family. Homodimer.

Its subcellular location is the cytoplasm. Participates actively in the response to hyperosmotic and heat shock by preventing the aggregation of stress-denatured proteins, in association with DnaK and GrpE. It is the nucleotide exchange factor for DnaK and may function as a thermosensor. Unfolded proteins bind initially to DnaJ; upon interaction with the DnaJ-bound protein, DnaK hydrolyzes its bound ATP, resulting in the formation of a stable complex. GrpE releases ADP from DnaK; ATP binding to DnaK triggers the release of the substrate protein, thus completing the reaction cycle. Several rounds of ATP-dependent interactions between DnaJ, DnaK and GrpE are required for fully efficient folding. The protein is Protein GrpE of Xylella fastidiosa (strain M23).